The sequence spans 681 residues: Methionine--tRNA ligase (681 aa).

Positions 18-28 (PYANGSIHLGH) match the 'HIGH' region motif. Positions 149, 152, 162, and 165 each coordinate Zn(2+). Positions 334-338 (KMSKS) match the 'KMSKS' region motif. Lys337 is a binding site for ATP. The tRNA-binding domain maps to 580–681 (DFAKLDLRIV…NGAEPGQRVS (102 aa)).

Belongs to the class-I aminoacyl-tRNA synthetase family. MetG type 1 subfamily. In terms of assembly, homodimer. It depends on Zn(2+) as a cofactor.

Its subcellular location is the cytoplasm. The catalysed reaction is tRNA(Met) + L-methionine + ATP = L-methionyl-tRNA(Met) + AMP + diphosphate. In terms of biological role, is required not only for elongation of protein synthesis but also for the initiation of all mRNA translation through initiator tRNA(fMet) aminoacylation. The chain is Methionine--tRNA ligase from Chromohalobacter salexigens (strain ATCC BAA-138 / DSM 3043 / CIP 106854 / NCIMB 13768 / 1H11).